The sequence spans 457 residues: Bifunctional protein GlmU (457 aa).

The segment at 1–229 (MSNSAKSVVI…HSEMEGVNNR (229 aa)) is pyrophosphorylase. UDP-N-acetyl-alpha-D-glucosamine is bound by residues 11–14 (LAAG), Lys-25, Gln-76, 81–82 (GT), 103–105 (YGD), Gly-140, Glu-154, Asn-169, and Asn-227. Asp-105 provides a ligand contact to Mg(2+). Asn-227 is a binding site for Mg(2+). The segment at 230 to 250 (LQLAALERIYQTEQAERLLLE) is linker. Residues 251 to 457 (GVMLLDPARF…GWKRPVKKKQ (207 aa)) are N-acetyltransferase. UDP-N-acetyl-alpha-D-glucosamine-binding residues include Arg-333 and Lys-351. His-363 serves as the catalytic Proton acceptor. Tyr-366 and Asn-377 together coordinate UDP-N-acetyl-alpha-D-glucosamine. Acetyl-CoA contacts are provided by residues Ala-380, 386–387 (NY), Ser-405, Ala-423, and Arg-440.

It in the N-terminal section; belongs to the N-acetylglucosamine-1-phosphate uridyltransferase family. This sequence in the C-terminal section; belongs to the transferase hexapeptide repeat family. As to quaternary structure, homotrimer. Mg(2+) serves as cofactor.

It is found in the cytoplasm. The enzyme catalyses alpha-D-glucosamine 1-phosphate + acetyl-CoA = N-acetyl-alpha-D-glucosamine 1-phosphate + CoA + H(+). The catalysed reaction is N-acetyl-alpha-D-glucosamine 1-phosphate + UTP + H(+) = UDP-N-acetyl-alpha-D-glucosamine + diphosphate. The protein operates within nucleotide-sugar biosynthesis; UDP-N-acetyl-alpha-D-glucosamine biosynthesis; N-acetyl-alpha-D-glucosamine 1-phosphate from alpha-D-glucosamine 6-phosphate (route II): step 2/2. It functions in the pathway nucleotide-sugar biosynthesis; UDP-N-acetyl-alpha-D-glucosamine biosynthesis; UDP-N-acetyl-alpha-D-glucosamine from N-acetyl-alpha-D-glucosamine 1-phosphate: step 1/1. Its pathway is bacterial outer membrane biogenesis; LPS lipid A biosynthesis. Catalyzes the last two sequential reactions in the de novo biosynthetic pathway for UDP-N-acetylglucosamine (UDP-GlcNAc). The C-terminal domain catalyzes the transfer of acetyl group from acetyl coenzyme A to glucosamine-1-phosphate (GlcN-1-P) to produce N-acetylglucosamine-1-phosphate (GlcNAc-1-P), which is converted into UDP-GlcNAc by the transfer of uridine 5-monophosphate (from uridine 5-triphosphate), a reaction catalyzed by the N-terminal domain. The polypeptide is Bifunctional protein GlmU (Proteus mirabilis (strain HI4320)).